The primary structure comprises 194 residues: Small ribosomal subunit protein uS4c (194 aa).

Residues 82-143 (MRLDNILFRL…KQRSKALIQN (62 aa)) form the S4 RNA-binding domain.

Belongs to the universal ribosomal protein uS4 family. As to quaternary structure, part of the 30S ribosomal subunit. Contacts protein S5. The interaction surface between S4 and S5 is involved in control of translational fidelity.

The protein localises to the plastid. It is found in the chloroplast. One of the primary rRNA binding proteins, it binds directly to 16S rRNA where it nucleates assembly of the body of the 30S subunit. Functionally, with S5 and S12 plays an important role in translational accuracy. The sequence is that of Small ribosomal subunit protein uS4c (rps4) from Sisyrinchium striatum (Satin flower).